Consider the following 53-residue polypeptide: uncharacterized protein (53 aa).

This is an uncharacterized protein from Plasmodium falciparum (isolate fcm17 / Senegal).